The primary structure comprises 129 residues: UPF0212 protein MA_1372 (129 aa).

The protein belongs to the UPF0212 family.

The sequence is that of UPF0212 protein MA_1372 from Methanosarcina acetivorans (strain ATCC 35395 / DSM 2834 / JCM 12185 / C2A).